The sequence spans 131 residues: Large ribosomal subunit protein bL12 (131 aa).

It belongs to the bacterial ribosomal protein bL12 family. In terms of assembly, homodimer. Part of the ribosomal stalk of the 50S ribosomal subunit. Forms a multimeric L10(L12)X complex, where L10 forms an elongated spine to which 2 to 4 L12 dimers bind in a sequential fashion. Binds GTP-bound translation factors.

Forms part of the ribosomal stalk which helps the ribosome interact with GTP-bound translation factors. Is thus essential for accurate translation. The chain is Large ribosomal subunit protein bL12 from Nocardioides sp. (strain ATCC BAA-499 / JS614).